The primary structure comprises 114 residues: Class I hydrophobin 6 (114 aa).

The first 19 residues, 1–19, serve as a signal peptide directing secretion; the sequence is MLFKQLILVATALTTLAVA. Intrachain disulfides connect C33–C93, C40–C87, C41–C74, and C94–C107. N42 carries an N-linked (GlcNAc...) asparagine glycan.

Belongs to the fungal hydrophobin family. In terms of assembly, self-assembles to form functional amyloid fibrils called rodlets. Self-assembly into fibrillar rodlets occurs spontaneously at hydrophobic:hydrophilic interfaces and the rodlets further associate laterally to form amphipathic monolayers.

The protein resides in the secreted. It localises to the cell wall. Aerial growth, conidiation, and dispersal of filamentous fungi in the environment rely upon a capability of their secreting small amphipathic proteins called hydrophobins (HPBs) with low sequence identity. Class I can self-assemble into an outermost layer of rodlet bundles on aerial cell surfaces, conferring cellular hydrophobicity that supports fungal growth, development and dispersal; whereas Class II form highly ordered films at water-air interfaces through intermolecular interactions but contribute nothing to the rodlet structure. This is Class I hydrophobin 6 from Pleurotus ostreatus (strain PC15) (Oyster mushroom).